The chain runs to 410 residues: Structure-specific endonuclease subunit SLX1 homolog (410 aa).

Residues 6–89 (QLHYCYFLLS…NICKVTRDNI (84 aa)) form the GIY-YIG domain.

The protein belongs to the SLX1 family. Forms a heterodimer with a member of the SLX4 family. The cofactor is a divalent metal cation.

It localises to the nucleus. In terms of biological role, catalytic subunit of a heterodimeric structure-specific endonuclease that resolves DNA secondary structures generated during DNA repair and recombination. Has endonuclease activity towards branched DNA substrates, introducing single-strand cuts in duplex DNA close to junctions with ss-DNA. The polypeptide is Structure-specific endonuclease subunit SLX1 homolog (Cryptosporidium parvum (strain Iowa II)).